The following is a 131-amino-acid chain: MATIATGLNIATQRVFVTSENRPVCLAGPVHLNNSWNLGSRTTNRMMKLQPIKAAPEGGISDVVEKSIKEAQETCAGDPVSGECVAAWDEVEELSAAASHARDKKKADGSDPLEEYCKDNPETNECRTYDN.

The N-terminal 53 residues, 1–53 (MATIATGLNIATQRVFVTSENRPVCLAGPVHLNNSWNLGSRTTNRMMKLQPIK), are a transit peptide targeting the chloroplast. Intrachain disulfides connect Cys75–Cys84 and Cys117–Cys126. The interval 97-131 (AASHARDKKKADGSDPLEEYCKDNPETNECRTYDN) is disordered. Residues 105–131 (KKADGSDPLEEYCKDNPETNECRTYDN) are compositionally biased toward basic and acidic residues.

The protein belongs to the CP12 family. As to quaternary structure, monomer. Component of a complex that contains two dimers of PRK, two tetramers of GAPDH and CP12. CP12 associates with GAPDH, causing its conformation to change. This GAPDH/CP12 complex binds PRK to form a half-complex (one unit). This unit probably dimerizes due partially to interactions between the enzymes of each unit. In terms of processing, contains two disulfide bonds; only the oxidized protein, with two disulfide bonds, is active in complex formation. The C-terminal disulfide is involved in the interaction with GAPDH and the N-terminal disulfide mediates the binding of PRK with this binary complex. As to expression, mostly expressed in cotyledons, leaves and flower stalks, and, to a lower extent, in flowers and stems. Barely detectable in roots and siliques.

Its subcellular location is the plastid. It localises to the chloroplast. Its function is as follows. Acts as a linker essential in the assembly of a core complex of PRK/GAPDH. Coordinates the reversible inactivation of chloroplast enzymes GAPDH and PRK during darkness in photosynthetic tissues. In Arabidopsis thaliana (Mouse-ear cress), this protein is Calvin cycle protein CP12-2, chloroplastic (CP12-2).